The primary structure comprises 493 residues: Cytochrome c-552 (493 aa).

The signal sequence occupies residues 1-25 (MEKKLKSWQGWLLFCGAMAVVFVLG). Histidine 116 provides a ligand contact to heme c. The heme site is built by cysteine 144, cysteine 147, and lysine 148. Positions 182, 185, 186, 224, 227, and 228 each coordinate heme c. Residues glutamate 230, tyrosine 231, lysine 276, and glutamine 278 each coordinate Ca(2+). Residue tyrosine 231 coordinates substrate. Position 279 (histidine 279) interacts with substrate. The heme c site is built by histidine 290, cysteine 297, cysteine 300, histidine 301, histidine 315, cysteine 328, cysteine 331, histidine 332, and histidine 407.

The protein belongs to the cytochrome c-552 family. Requires Ca(2+) as cofactor. Heme c is required as a cofactor.

It localises to the periplasm. The enzyme catalyses 6 Fe(III)-[cytochrome c] + NH4(+) + 2 H2O = 6 Fe(II)-[cytochrome c] + nitrite + 8 H(+). It functions in the pathway nitrogen metabolism; nitrate reduction (assimilation). Functionally, catalyzes the reduction of nitrite to ammonia, consuming six electrons in the process. This is Cytochrome c-552 from Bacteroides fragilis (strain ATCC 25285 / DSM 2151 / CCUG 4856 / JCM 11019 / LMG 10263 / NCTC 9343 / Onslow / VPI 2553 / EN-2).